Consider the following 388-residue polypeptide: Alanine racemase (388 aa).

Lysine 40 functions as the Proton acceptor; specific for D-alanine in the catalytic mechanism. N6-(pyridoxal phosphate)lysine is present on lysine 40. Arginine 137 contacts substrate. Residue tyrosine 269 is the Proton acceptor; specific for L-alanine of the active site. Methionine 318 contributes to the substrate binding site.

It belongs to the alanine racemase family. The cofactor is pyridoxal 5'-phosphate.

The catalysed reaction is L-alanine = D-alanine. It participates in amino-acid biosynthesis; D-alanine biosynthesis; D-alanine from L-alanine: step 1/1. Catalyzes the interconversion of L-alanine and D-alanine. May also act on other amino acids. The sequence is that of Alanine racemase (alr) from Halalkalibacterium halodurans (strain ATCC BAA-125 / DSM 18197 / FERM 7344 / JCM 9153 / C-125) (Bacillus halodurans).